Reading from the N-terminus, the 271-residue chain is Cobalt import ATP-binding protein CbiO (271 aa).

The ABC transporter domain occupies 2-236 (LATSDLWFRY…TEAMEHAGLT (235 aa)). 34-41 (GANGCGKS) contributes to the ATP binding site.

It belongs to the ABC transporter superfamily. Cobalt importer (TC 3.A.1.18.1) family. Forms an energy-coupling factor (ECF) transporter complex composed of an ATP-binding protein (A component, CbiO), a transmembrane protein (T component, CbiQ) and 2 possible substrate-capture proteins (S components, CbiM and CbiN) of unknown stoichimetry. Expression of just CbiMN in E.coli confers some cobalt uptake.

The protein localises to the cell inner membrane. It participates in cofactor biosynthesis; adenosylcobalamin biosynthesis. Its function is as follows. Part of the energy-coupling factor (ECF) transporter complex CbiMNOQ involved in cobalt import. The complex confers cobalt uptake upon expression in E.coli; can also transport nickel with a very low affinity. Presumably responsible for energy coupling to the transport system. The chain is Cobalt import ATP-binding protein CbiO from Salmonella typhimurium (strain LT2 / SGSC1412 / ATCC 700720).